A 715-amino-acid polypeptide reads, in one-letter code: Putative macrophage stimulating 1-like protein (715 aa).

The first 20 residues, 1–20 (MAPAPVTLLAPGAASSMSCS), serve as a signal peptide directing secretion. In terms of domain architecture, PAN spans 21-110 (QPGQRSPSND…GRCDLFQEKG (90 aa)). 4 Kringle domains span residues 63–156 (GRCG…IKSC), 160–238 (ACVW…LPRC), 252–345 (SCFR…IRRC), and 353–464 (DCYH…LRRC). Disulfide bonds link Cys-127/Cys-151, Cys-161/Cys-238, Cys-182/Cys-221, Cys-210/Cys-233, Cys-253/Cys-345, Cys-316/Cys-339, Cys-354/Cys-464, Cys-375/Cys-447, Cys-511/Cys-527, Cys-606/Cys-671, Cys-636/Cys-650, and Cys-661/Cys-689. The region spanning 488–713 (VAGGHPGNSP…FVDWIHKVMR (226 aa)) is the Peptidase S1 domain.

It belongs to the peptidase S1 family. Plasminogen subfamily.

The protein resides in the secreted. The protein is Putative macrophage stimulating 1-like protein (MST1L) of Homo sapiens (Human).